We begin with the raw amino-acid sequence, 94 residues long: uncharacterized protein (94 aa).

2 helical membrane-spanning segments follow: residues 7–24 (IFFI…SFNV) and 39–61 (AVPI…LLFL). Residues 68–94 (TRKQKREDSPTSAPTGGVSSPEHVDVP) are disordered.

It localises to the cell membrane. This is an uncharacterized protein from Treponema pallidum (strain Nichols).